The chain runs to 233 residues: Lysine exporter LysE (233 aa).

At 1–2 the chain is on the cytoplasmic side; it reads ME. Residues 3–23 form a helical membrane-spanning segment; that stretch reads IFITGLLLGASLLLSIGPQNV. Residues 24-65 lie on the Periplasmic side of the membrane; sequence LVIKQGIKREGLIAVLLVCLISDVFLFIAGTLGVDLLSNAAP. The helical transmembrane segment at 66–86 threads the bilayer; that stretch reads IVLDIMRWGGIAYLLWFAVMA. Topologically, residues 87-143 are cytoplasmic; the sequence is AKDAMTNKVEAPQIIEETEPTVPDDTPLGGSAVATDTRNRVRVEVSVDKQRVWVKPM. A helical transmembrane segment spans residues 144–164; that stretch reads LMAIVLTWLNPNAYLDAFVFI. Residues 165 to 176 are Periplasmic-facing; the sequence is GGVGAQYGDTGR. A helical membrane pass occupies residues 177 to 197; the sequence is WIFAAGAFAASLIWFPLVGFG. The Cytoplasmic segment spans residues 198-212; the sequence is AAALSRPLSSPKVWR. The chain crosses the membrane as a helical span at residues 213–233; sequence WINVVVAVVMTALAIKLMLMG.

This sequence belongs to the LysE/ArgO transporter (TC 2.A.75) family.

The protein localises to the cell inner membrane. Its activity is regulated as follows. Transport process is modulated by three forces: the membrane potential, the chemical potential of lysine, and the proton gradient. Strongly inhibited by CCCP and valinomycin. In terms of biological role, catalyzes the efflux of L-lysine. Can also export L-arginine and L-citrulline. The lysEG system prevents bacteriostasis due to elevated L-lysine or L-arginine concentrations that arise during growth in the presence of peptides or in mutants possessing a deregulated biosynthesis pathway. In vitro, can also export D-lysine during biotechnological production of D-amino acids. In Corynebacterium glutamicum (strain ATCC 13032 / DSM 20300 / JCM 1318 / BCRC 11384 / CCUG 27702 / LMG 3730 / NBRC 12168 / NCIMB 10025 / NRRL B-2784 / 534), this protein is Lysine exporter LysE.